The following is a 580-amino-acid chain: Proline--tRNA ligase (580 aa).

The protein belongs to the class-II aminoacyl-tRNA synthetase family. ProS type 1 subfamily. Homodimer.

It localises to the cytoplasm. It catalyses the reaction tRNA(Pro) + L-proline + ATP = L-prolyl-tRNA(Pro) + AMP + diphosphate. In terms of biological role, catalyzes the attachment of proline to tRNA(Pro) in a two-step reaction: proline is first activated by ATP to form Pro-AMP and then transferred to the acceptor end of tRNA(Pro). As ProRS can inadvertently accommodate and process non-cognate amino acids such as alanine and cysteine, to avoid such errors it has two additional distinct editing activities against alanine. One activity is designated as 'pretransfer' editing and involves the tRNA(Pro)-independent hydrolysis of activated Ala-AMP. The other activity is designated 'posttransfer' editing and involves deacylation of mischarged Ala-tRNA(Pro). The misacylated Cys-tRNA(Pro) is not edited by ProRS. The sequence is that of Proline--tRNA ligase from Albidiferax ferrireducens (strain ATCC BAA-621 / DSM 15236 / T118) (Rhodoferax ferrireducens).